The primary structure comprises 339 residues: Trace amine-associated receptor 2 (339 aa).

Topologically, residues 1-36 (MASFEAQQETFDCSEYGNGSCPENERSLGVRAAMYS) are extracellular. Residue Asn-18 is glycosylated (N-linked (GlcNAc...) asparagine). 2 cysteine pairs are disulfide-bonded: Cys-21–Cys-185 and Cys-104–Cys-189. A helical transmembrane segment spans residues 37–57 (LMACAIFITIFGNLAMIISIS). Topologically, residues 58–67 (YFKQLHTPTN) are cytoplasmic. Residues 68-88 (LLILSMAVTDFLLGFTIMPYS) form a helical membrane-spanning segment. The Extracellular segment spans residues 89–106 (MVRSVENCWYFGLTFCKI). The chain crosses the membrane as a helical span at residues 107-127 (HYSFDLMLSITSIFHLCSVAV). Residues 128–150 (DRFYAICHPLHYCTKMTIPVVRR) are Cytoplasmic-facing. The helical transmembrane segment at 151-171 (LLLVCWSVPGAFAFGVVFSEA) threads the bilayer. Residues 172–195 (YADGIEGYDILVACSSSCPVMFNK) lie on the Extracellular side of the membrane. The chain crosses the membrane as a helical span at residues 196 to 216 (LWGTTLFVAGFFTPSSMMVGI). Topologically, residues 217–251 (YGKIFAVSKKHARVIDNLPENQNNQMRKDKKAAKT) are cytoplasmic. The chain crosses the membrane as a helical span at residues 252 to 272 (LGIVMGVFLLCWFPCFFTILL). Residues 273–287 (DPFLNFSTPAVLFDA) are Extracellular-facing. N-linked (GlcNAc...) asparagine glycosylation occurs at Asn-277. The chain crosses the membrane as a helical span at residues 288–310 (LTWFGYFNSTCNPLIYGFFYPWF). Residues 311-339 (RRALKYILLGKIFSSHFHNTNLFTQKETE) are Cytoplasmic-facing.

This sequence belongs to the G-protein coupled receptor 1 family. In terms of tissue distribution, mainly expressed in neurons of the olfactory epithelium. Also present in the limbic brain areas receiving projection from the olfactory system and several brain regions, including the hippocampus, cerebellum, cortex, raphe nuclei, hypothalamus and habenula.

The protein resides in the cell membrane. Functionally, orphan olfactory receptor specific for trace amines. Trace amine compounds are enriched in animal body fluids and act on trace amine-associated receptors (TAARs) to elicit both intraspecific and interspecific innate behaviors. Ligand-binding causes a conformation change that triggers signaling via the G(s)-class of G-proteins which activate adenylate cyclase. May also be required to provide olfactory input into limbic brain areas to regulate emotional behaviors likely via modulation of the dopamine system. This chain is Trace amine-associated receptor 2, found in Mus musculus (Mouse).